We begin with the raw amino-acid sequence, 70 residues long: Conotoxin TxMMSK-02 (70 aa).

The N-terminal stretch at 1 to 20 is a signal peptide; sequence MMSKLGALLTICLLLFSLTA. A propeptide spanning residues 21-53 is cleaved from the precursor; it reads VPLDGDQHADQPAQRLQDRIPTEDHPLFDPNKR. 3 disulfides stabilise this stretch: Cys54–Cys68, Cys55–Cys64, and Cys60–Cys67. Pro66 is modified (4-hydroxyproline). Tyrosine amide is present on Tyr69.

This sequence belongs to the conotoxin M superfamily. Expressed by the venom duct.

The protein resides in the secreted. This Conus textile (Cloth-of-gold cone) protein is Conotoxin TxMMSK-02.